Reading from the N-terminus, the 279-residue chain is Topoisomerase I damage affected protein 4 (279 aa).

At M1 to H32 the chain is on the extracellular side. A helical membrane pass occupies residues L33 to F53. Over L54–T79 the chain is Cytoplasmic. The TLC domain maps to L70–K271. A helical transmembrane segment spans residues V80–M100. Topologically, residues H101–S110 are extracellular. A helical membrane pass occupies residues Y111–V131. At R132 to K135 the chain is on the cytoplasmic side. The chain crosses the membrane as a helical span at residues L136–L156. The Extracellular portion of the chain corresponds to R157–P162. Residues W163 to I183 traverse the membrane as a helical segment. The Cytoplasmic segment spans residues M184–N192. A helical membrane pass occupies residues S193–V213. Residues R214 to K238 lie on the Extracellular side of the membrane. The chain crosses the membrane as a helical span at residues F239–F259. The Cytoplasmic segment spans residues K260–D279.

Belongs to the TMEM56 family.

Its subcellular location is the membrane. This is Topoisomerase I damage affected protein 4 (TDA4) from Saccharomyces cerevisiae (strain ATCC 204508 / S288c) (Baker's yeast).